A 428-amino-acid polypeptide reads, in one-letter code: Probable dual-specificity RNA methyltransferase RlmN 2 (428 aa).

Residue glutamate 142 is the Proton acceptor of the active site. Residues 148–414 (FAGRATACVS…STVRQRRGID (267 aa)) form the Radical SAM core domain. A disulfide bridge connects residues cysteine 155 and cysteine 419. [4Fe-4S] cluster-binding residues include cysteine 162, cysteine 166, and cysteine 169. Over residues 207–228 (MRDPSPGREAGEKSRDEADRHR) the composition is skewed to basic and acidic residues. A disordered region spans residues 207–232 (MRDPSPGREAGEKSRDEADRHRAPPT). Residues 244-245 (GE), serine 276, 299-301 (SLH), and asparagine 375 each bind S-adenosyl-L-methionine. Catalysis depends on cysteine 419, which acts as the S-methylcysteine intermediate.

It belongs to the radical SAM superfamily. RlmN family. [4Fe-4S] cluster is required as a cofactor.

It is found in the cytoplasm. It catalyses the reaction adenosine(2503) in 23S rRNA + 2 reduced [2Fe-2S]-[ferredoxin] + 2 S-adenosyl-L-methionine = 2-methyladenosine(2503) in 23S rRNA + 5'-deoxyadenosine + L-methionine + 2 oxidized [2Fe-2S]-[ferredoxin] + S-adenosyl-L-homocysteine. The catalysed reaction is adenosine(37) in tRNA + 2 reduced [2Fe-2S]-[ferredoxin] + 2 S-adenosyl-L-methionine = 2-methyladenosine(37) in tRNA + 5'-deoxyadenosine + L-methionine + 2 oxidized [2Fe-2S]-[ferredoxin] + S-adenosyl-L-homocysteine. Specifically methylates position 2 of adenine 2503 in 23S rRNA and position 2 of adenine 37 in tRNAs. The polypeptide is Probable dual-specificity RNA methyltransferase RlmN 2 (Opitutus terrae (strain DSM 11246 / JCM 15787 / PB90-1)).